Reading from the N-terminus, the 233-residue chain is Superoxide dismutase [Mn], mitochondrial (233 aa).

The transit peptide at 1–26 directs the protein to the mitochondrion; it reads MFAKTAAANLTKKGGLSLLSTTARRT. Positions 52 and 107 each coordinate Mn(2+). Phosphothreonine occurs at positions 147 and 149. Mn(2+) contacts are provided by aspartate 194 and histidine 198.

The protein belongs to the iron/manganese superoxide dismutase family. In terms of assembly, homotetramer. Mn(2+) serves as cofactor.

The protein resides in the mitochondrion matrix. It carries out the reaction 2 superoxide + 2 H(+) = H2O2 + O2. Functionally, destroys superoxide anion radicals which are normally produced within the cells and which are toxic to biological systems. This chain is Superoxide dismutase [Mn], mitochondrial (SOD2), found in Saccharomyces cerevisiae (strain ATCC 204508 / S288c) (Baker's yeast).